A 272-amino-acid chain; its full sequence is NADPH-dependent 7-cyano-7-deazaguanine reductase (272 aa).

80–82 (VES) provides a ligand contact to substrate. Residue 82–83 (SK) participates in NADPH binding. Cys178 (thioimide intermediate) is an active-site residue. Asp185 functions as the Proton donor in the catalytic mechanism. 217 to 218 (AE) serves as a coordination point for substrate. 246–247 (RG) lines the NADPH pocket.

This sequence belongs to the GTP cyclohydrolase I family. QueF type 2 subfamily. Homodimer.

The protein resides in the cytoplasm. It carries out the reaction 7-aminomethyl-7-carbaguanine + 2 NADP(+) = 7-cyano-7-deazaguanine + 2 NADPH + 3 H(+). It participates in tRNA modification; tRNA-queuosine biosynthesis. Its function is as follows. Catalyzes the NADPH-dependent reduction of 7-cyano-7-deazaguanine (preQ0) to 7-aminomethyl-7-deazaguanine (preQ1). This Rickettsia typhi (strain ATCC VR-144 / Wilmington) protein is NADPH-dependent 7-cyano-7-deazaguanine reductase.